The primary structure comprises 308 residues: Large ribosomal subunit protein mL38 (308 aa).

A mitochondrion-targeting transit peptide spans 1–17 (MKRVWPRIPTISNVCRA).

The protein belongs to the phosphatidylethanolamine-binding protein family. Mitochondrion-specific ribosomal protein mL38 subfamily. In terms of assembly, component of the mitochondrial large ribosomal subunit (mt-LSU). Mature yeast 74S mitochondrial ribosomes consist of a small (37S) and a large (54S) subunit. The 37S small subunit contains a 15S ribosomal RNA (15S mt-rRNA) and at least 32 different proteins. The 54S large subunit contains a 21S rRNA (21S mt-rRNA) and at least 45 different proteins.

The protein resides in the mitochondrion. Component of the mitochondrial ribosome (mitoribosome), a dedicated translation machinery responsible for the synthesis of mitochondrial genome-encoded proteins, including at least some of the essential transmembrane subunits of the mitochondrial respiratory chain. The mitoribosomes are attached to the mitochondrial inner membrane and translation products are cotranslationally integrated into the membrane. The protein is Large ribosomal subunit protein mL38 (mrpl35) of Schizosaccharomyces pombe (strain 972 / ATCC 24843) (Fission yeast).